A 168-amino-acid chain; its full sequence is Cytochrome c-type biogenesis protein CcmE (168 aa).

Residues 1 to 23 (MTTAPSGLPGTPLPPARRRERPR) are Cytoplasmic-facing. A helical; Signal-anchor for type II membrane protein transmembrane segment spans residues 24–44 (WPLLVAGAAVLGLIGYMVLGN). Topologically, residues 45-168 (ANSNLVYYVL…KILNDQSTKP (124 aa)) are extracellular. Heme contacts are provided by H137 and Y141. Positions 145-168 (DSKGEGQYSQDDLKKILNDQSTKP) are disordered.

Belongs to the CcmE/CycJ family.

It localises to the cell membrane. Functionally, heme chaperone required for the biogenesis of c-type cytochromes. Transiently binds heme delivered by CcmC and transfers the heme to apo-cytochromes in a process facilitated by CcmF and CcmH. The polypeptide is Cytochrome c-type biogenesis protein CcmE (Deinococcus radiodurans (strain ATCC 13939 / DSM 20539 / JCM 16871 / CCUG 27074 / LMG 4051 / NBRC 15346 / NCIMB 9279 / VKM B-1422 / R1)).